The primary structure comprises 323 residues: MSNLKQLRTRIKSVKSTQKITKAMQLVSASKMAKIKSQIANSNFYIEAVSKMMSAILSIDMYELSIEEQKFFNTVPNKANLLIVMTSQRGLCGTFNYSIIKQVKNDIKELENKGEQIKLIIIGKKGYEALKRQYVNYIDSYFELPKIHDENLMLQVKQKIMSAVENLEISNCVIYFNKFKNAMTQIMTRQQILPVAKYQDDSMIDNPIVNLVGFGYKERGVKPINNRRATSDIVGESKSIDYNYEYEGASLISNLINLYVNSQINYALLQSRASEEGARMTAMENATNNANDLISKLVLKLNRSRQAIITTELIEIIAGSEAV.

The protein belongs to the ATPase gamma chain family. As to quaternary structure, F-type ATPases have 2 components, CF(1) - the catalytic core - and CF(0) - the membrane proton channel. CF(1) has five subunits: alpha(3), beta(3), gamma(1), delta(1), epsilon(1). CF(0) has three main subunits: a, b and c.

The protein resides in the cell inner membrane. Its function is as follows. Produces ATP from ADP in the presence of a proton gradient across the membrane. The gamma chain is believed to be important in regulating ATPase activity and the flow of protons through the CF(0) complex. This chain is ATP synthase gamma chain, found in Rickettsia africae (strain ESF-5).